We begin with the raw amino-acid sequence, 284 residues long: 3-methyl-2-oxobutanoate hydroxymethyltransferase (284 aa).

The Mg(2+) site is built by Asp44 and Asp83. 3-methyl-2-oxobutanoate is bound by residues 44–45 (DS), Asp83, and Lys112. Glu114 provides a ligand contact to Mg(2+). Glu181 (proton acceptor) is an active-site residue.

It belongs to the PanB family. In terms of assembly, homodecamer; pentamer of dimers. Requires Mg(2+) as cofactor.

The protein localises to the cytoplasm. The catalysed reaction is 3-methyl-2-oxobutanoate + (6R)-5,10-methylene-5,6,7,8-tetrahydrofolate + H2O = 2-dehydropantoate + (6S)-5,6,7,8-tetrahydrofolate. The protein operates within cofactor biosynthesis; coenzyme A biosynthesis. Its activity is regulated as follows. Neither activated nor inhibited by coenzyme A. Its function is as follows. Catalyzes the reversible reaction in which hydroxymethyl group from 5,10-methylenetetrahydrofolate is transferred onto alpha-ketoisovalerate to form ketopantoate. The protein is 3-methyl-2-oxobutanoate hydroxymethyltransferase of Thermococcus kodakarensis (strain ATCC BAA-918 / JCM 12380 / KOD1) (Pyrococcus kodakaraensis (strain KOD1)).